We begin with the raw amino-acid sequence, 582 residues long: Putative BTB/POZ domain-containing protein At3g08660 (582 aa).

The tract at residues 1–21 (MGSDSTLSLPSSSPPCNNRSS) is disordered. The BTB domain occupies 36–103 (GDIIVVVDGE…CYGINFDITA (68 aa)). Residues 196–466 (EMWTEELSAL…VRVLYTEQLR (271 aa)) enclose the NPH3 domain. Y407 carries the phosphotyrosine modification. Positions 558 to 582 (GGETRQKVNRKSRSVSERKSSRSGR) are disordered. A compositionally biased stretch (basic and acidic residues) spans 571 to 582 (SVSERKSSRSGR).

This sequence belongs to the NPH3 family.

The protein operates within protein modification; protein ubiquitination. Its function is as follows. May act as a substrate-specific adapter of an E3 ubiquitin-protein ligase complex (CUL3-RBX1-BTB) which mediates the ubiquitination and subsequent proteasomal degradation of target proteins. This chain is Putative BTB/POZ domain-containing protein At3g08660, found in Arabidopsis thaliana (Mouse-ear cress).